The chain runs to 201 residues: Small ribosomal subunit protein uS4 (201 aa).

The interval 1-42 is disordered; it reads MARYTGPATRKSRRLGVDLVGGDQSFEKRPYPPGQHGRARIK. One can recognise an S4 RNA-binding domain in the interval 91–157; it reads SRLDNVVYRA…LPFQIARETA (67 aa).

The protein belongs to the universal ribosomal protein uS4 family. As to quaternary structure, part of the 30S ribosomal subunit. Contacts protein S5. The interaction surface between S4 and S5 is involved in control of translational fidelity.

Functionally, one of the primary rRNA binding proteins, it binds directly to 16S rRNA where it nucleates assembly of the body of the 30S subunit. In terms of biological role, with S5 and S12 plays an important role in translational accuracy. The sequence is that of Small ribosomal subunit protein uS4 from Mycolicibacterium smegmatis (strain ATCC 700084 / mc(2)155) (Mycobacterium smegmatis).